We begin with the raw amino-acid sequence, 140 residues long: Small ribosomal subunit protein eS17x (140 aa).

This sequence belongs to the eukaryotic ribosomal protein eS17 family.

The polypeptide is Small ribosomal subunit protein eS17x (RPS17C) (Arabidopsis thaliana (Mouse-ear cress)).